Reading from the N-terminus, the 531-residue chain is NADH-quinone oxidoreductase subunit N (531 aa).

14 helical membrane-spanning segments follow: residues 8–28 (VEYF…AGVL), 41–61 (AQVT…IVVA), 81–101 (ATLF…VFMA), 146–166 (GATQ…MMVF), 172–192 (LLTM…MCGL), 208–228 (FLLG…LYGA), 250–270 (ALAG…AVPF), 282–302 (PTPI…GALL), 318–338 (PVLW…AVNQ), 350–370 (VAHV…GLSA), 372–392 (LFYL…VGLV), 418–438 (IVGV…LTSG), 453–473 (GAVP…YFYV), and 500–520 (AAIA…QPVL).

The protein belongs to the complex I subunit 2 family. NDH-1 is composed of 14 different subunits. Subunits NuoA, H, J, K, L, M, N constitute the membrane sector of the complex.

It localises to the cell membrane. It catalyses the reaction a quinone + NADH + 5 H(+)(in) = a quinol + NAD(+) + 4 H(+)(out). In terms of biological role, NDH-1 shuttles electrons from NADH, via FMN and iron-sulfur (Fe-S) centers, to quinones in the respiratory chain. The immediate electron acceptor for the enzyme in this species is believed to be a menaquinone. Couples the redox reaction to proton translocation (for every two electrons transferred, four hydrogen ions are translocated across the cytoplasmic membrane), and thus conserves the redox energy in a proton gradient. This is NADH-quinone oxidoreductase subunit N from Mycobacterium tuberculosis (strain CDC 1551 / Oshkosh).